We begin with the raw amino-acid sequence, 807 residues long: 85/88 kDa calcium-independent phospholipase A2 (807 aa).

Phosphoserine is present on S13. 9 ANK repeats span residues 120–147 (WTVT…ANST), 151–181 (EGCT…QMDV), 185–215 (KGET…GLNQ), 219–248 (QGLT…RCNI), 251–281 (PGGF…QIHS), 286–312 (YGAS…DVDS), 316–345 (SGNT…NAGA), 349–378 (HGNT…EVDT), and 382–403 (FGET…KALL). Transmembrane regions (helical) follow at residues 481 to 501 (LLCL…LIAI) and 512 to 532 (LFDW…ILHS). One can recognise a PNPLA domain in the interval 482 to 666 (LCLDGGGVKG…LANNPTLDAM (185 aa)). The GXGXXG motif lies at 486 to 491 (GGGVKG). The GXSXG signature appears at 518-522 (GTSTG). Residue S520 is the Nucleophile of the active site. D653 functions as the Proton acceptor in the catalytic mechanism. The DGA/G signature appears at 653–655 (DGG). A calmodulin-binding (1-9-14 motif) region spans residues 678-687 (RKGQGNKVKK). The interval 749 to 760 (AWCEMVGIQYFR) is calmodulin-binding (IQ motif).

As to quaternary structure, homodimer formed by catalytic domains tightly interacting through a large hydrophobic interface. The contact area involves 3 alpha helices, several loops and a part of the beta sheet from each monomer. Both active sites of the dimer are in close proximity adopting an open conformation that provide sufficient space for phospholipid access and favoring cooperativity in deacylation-reacylation reactions. Each monomer has 9 ankyrin repeats stacked side-by-side in an elongated structure oriented outwards from the catalytic core. In terms of tissue distribution, expressed in pancreatic beta-cells. Expressed in skeletal muscle (at protein level).

Its subcellular location is the cytoplasm. The protein resides in the cell membrane. It localises to the mitochondrion. The protein localises to the cell projection. It is found in the pseudopodium. The enzyme catalyses a 1,2-diacyl-sn-glycero-3-phosphocholine + H2O = a 1-acyl-sn-glycero-3-phosphocholine + a fatty acid + H(+). The catalysed reaction is a 1-O-alkyl-2-acyl-sn-glycero-3-phosphocholine + H2O = a 1-O-alkyl-sn-glycero-3-phosphocholine + a fatty acid + H(+). It carries out the reaction 1,2-dihexadecanoyl-sn-glycero-3-phosphocholine + H2O = 1-hexadecanoyl-sn-glycero-3-phosphocholine + hexadecanoate + H(+). It catalyses the reaction 1-hexadecanoyl-2-(9Z-octadecenoyl)-sn-glycero-3-phosphocholine + H2O = 1-hexadecanoyl-sn-glycero-3-phosphocholine + (9Z)-octadecenoate + H(+). The enzyme catalyses 1-hexadecanoyl-2-(9Z,12Z-octadecadienoyl)-sn-glycero-3-phosphocholine + H2O = (9Z,12Z)-octadecadienoate + 1-hexadecanoyl-sn-glycero-3-phosphocholine + H(+). The catalysed reaction is 1-hexadecanoyl-2-(5Z,8Z,11Z,14Z-eicosatetraenoyl)-sn-glycero-3-phosphocholine + H2O = 1-hexadecanoyl-sn-glycero-3-phosphocholine + (5Z,8Z,11Z,14Z)-eicosatetraenoate + H(+). It carries out the reaction 1-octadecanoyl-2-(5Z,8Z,11Z,14Z-eicosatetraenoyl)-sn-glycero-3-phosphocholine + H2O = 1-octadecanoyl-sn-glycero-3-phosphocholine + (5Z,8Z,11Z,14Z)-eicosatetraenoate + H(+). It catalyses the reaction 1-hexadecanoyl-2-(5Z,8Z,11Z,14Z-eicosatetraenoyl)-sn-glycero-3-phosphoethanolamine + H2O = 1-hexadecanoyl-sn-glycero-3-phosphoethanolamine + (5Z,8Z,11Z,14Z)-eicosatetraenoate + H(+). The enzyme catalyses 1,2-dihexadecanoyl-sn-glycero-3-phosphate + H2O = 1-hexadecanoyl-sn-glycero-3-phosphate + hexadecanoate + H(+). The catalysed reaction is a 1-acyl-sn-glycero-3-phosphocholine + H2O = sn-glycerol 3-phosphocholine + a fatty acid + H(+). It carries out the reaction 1-hexadecanoyl-sn-glycero-3-phosphocholine + H2O = sn-glycerol 3-phosphocholine + hexadecanoate + H(+). It catalyses the reaction 1-(5Z,8Z,11Z,14Z-eicosatetraenoyl)-sn-glycero-3-phosphocholine + H2O = sn-glycerol 3-phosphocholine + (5Z,8Z,11Z,14Z)-eicosatetraenoate + H(+). The enzyme catalyses 2-(5Z,8Z,11Z,14Z)-eicosatetraenoyl-sn-glycero-3-phosphocholine + H2O = sn-glycerol 3-phosphocholine + (5Z,8Z,11Z,14Z)-eicosatetraenoate + H(+). The catalysed reaction is 1-O-hexadecyl-2-(5Z,8Z,11Z,14Z)-eicosatetraenoyl-sn-glycero-3-phosphocholine + H2O = 1-O-hexadecyl-sn-glycero-3-phosphocholine + (5Z,8Z,11Z,14Z)-eicosatetraenoate + H(+). It carries out the reaction 1-O-hexadecyl-2-acetyl-sn-glycero-3-phosphocholine + H2O = 1-O-hexadecyl-sn-glycero-3-phosphocholine + acetate + H(+). It catalyses the reaction hexadecanoyl-CoA + H2O = hexadecanoate + CoA + H(+). The enzyme catalyses 1',3'-bis[1,2-di-(9Z-octadecenoyl)-sn-glycero-3-phospho]-glycerol + H2O = 1'-[1,2-di-(9Z-octadecenoyl)-sn-glycero-3-phospho]-3'-[1-(9Z-octadecenoyl)-sn-glycero-3-phospho]-glycerol + (9Z)-octadecenoate + H(+). The catalysed reaction is 1'-[1,2-di-(9Z-octadecenoyl)-sn-glycero-3-phospho]-3'-[1-(9Z-octadecenoyl)-sn-glycero-3-phospho]-glycerol + H2O = 1',3'-bis-[1-(9Z-octadecenoyl)-sn-glycero-3-phospho]-glycerol + (9Z)-octadecenoate + H(+). It carries out the reaction 1',3'-bis-[1,2-di-(9Z,12Z-octadecadienoyl)-sn-glycero-3-phospho]-glycerol + H2O = 1'-[1,2-di-(9Z,12Z-octadecadienoyl)-sn-glycero-3-phospho]-3'-[1-(9Z,12Z-octadecadienoyl)-sn-glycero-3-phospho]-glycerol + (9Z,12Z)-octadecadienoate + H(+). It catalyses the reaction 1-octadecanoyl-2-(15-hydroxy-(5Z,8Z,11Z,13E)-eicosatetraenoyl)-sn-glycero-3-phosphoethanolamine + H2O = 1-octadecanoyl-sn-glycero-3-phosphoethanolamine + 15-hydroxy-(5Z,8Z,11Z,13E)-eicosatetraenoate + H(+). With respect to regulation, activated by ATP. Inhibited by calcium-activated calmodulin. Inhibited by bromoenol lactone (BEL). Its function is as follows. Calcium-independent phospholipase involved in phospholipid remodeling with implications in cellular membrane homeostasis, mitochondrial integrity and signal transduction. Hydrolyzes the ester bond of the fatty acyl group attached at sn-1 or sn-2 position of phospholipids (phospholipase A1 and A2 activity respectively), producing lysophospholipids that are used in deacylation-reacylation cycles. Hydrolyzes both saturated and unsaturated long fatty acyl chains in various glycerophospholipid classes such as phosphatidylcholines, phosphatidylethanolamines and phosphatidates, with a preference for hydrolysis at sn-2 position. Can further hydrolyze lysophospholipids carrying saturated fatty acyl chains (lysophospholipase activity). Upon oxidative stress, contributes to remodeling of mitochondrial phospholipids in pancreatic beta cells, in a repair mechanism to reduce oxidized lipid content. Preferentially hydrolyzes oxidized polyunsaturated fatty acyl chains from cardiolipins, yielding monolysocardiolipins that can be reacylated with unoxidized fatty acyls to regenerate native cardiolipin species. Hydrolyzes oxidized glycerophosphoethanolamines present in pancreatic islets, releasing oxidized polyunsaturated fatty acids such as hydroxyeicosatetraenoates (HETEs). Has thioesterase activity toward fatty-acyl CoA releasing CoA-SH known to facilitate fatty acid transport and beta-oxidation in mitochondria particularly in skeletal muscle. Plays a role in regulation of membrane dynamics and homeostasis. Selectively hydrolyzes sn-2 arachidonoyl group in plasmalogen phospholipids, structural components of lipid rafts and myelin. Regulates F-actin polymerization at the pseudopods, which is required for both speed and directionality of MCP1/CCL2-induced monocyte chemotaxis. Targets membrane phospholipids to produce potent lipid signaling messengers. Generates lysophosphatidate (LPA, 1-acyl-glycerol-3-phosphate), which acts via G-protein receptors in various cell types. Has phospholipase A2 activity toward platelet-activating factor (PAF, 1-O-alkyl-2-acetyl-sn-glycero-3-phosphocholine), likely playing a role in inactivation of this potent pro-inflammatory signaling lipid. In response to glucose, amplifies calcium influx in pancreatic beta cells to promote INS secretion. This Rattus norvegicus (Rat) protein is 85/88 kDa calcium-independent phospholipase A2 (Pla2g6).